The chain runs to 241 residues: 2,3,4,5-tetrahydropyridine-2,6-dicarboxylate N-acetyltransferase (241 aa).

This sequence belongs to the transferase hexapeptide repeat family. DapH subfamily.

It carries out the reaction (S)-2,3,4,5-tetrahydrodipicolinate + acetyl-CoA + H2O = L-2-acetamido-6-oxoheptanedioate + CoA. The protein operates within amino-acid biosynthesis; L-lysine biosynthesis via DAP pathway; LL-2,6-diaminopimelate from (S)-tetrahydrodipicolinate (acetylase route): step 1/3. In terms of biological role, catalyzes the transfer of an acetyl group from acetyl-CoA to tetrahydrodipicolinate. In Thermoanaerobacter sp. (strain X514), this protein is 2,3,4,5-tetrahydropyridine-2,6-dicarboxylate N-acetyltransferase.